Reading from the N-terminus, the 107-residue chain is Heme-degrading monooxygenase (107 aa).

The ABM domain occupies 2-94 (IIVTNTAKIT…YILDNKIAYY (93 aa)). N6 contacts Fe cation. H76 contributes to the heme binding site.

The protein belongs to the antibiotic biosynthesis monooxygenase family. Heme-degrading monooxygenase IsdG subfamily. In terms of assembly, homodimer.

Its subcellular location is the cytoplasm. The catalysed reaction is heme b + 3 reduced [NADPH--hemoprotein reductase] + 3 O2 = biliverdin IXalpha + CO + Fe(2+) + 3 oxidized [NADPH--hemoprotein reductase] + 3 H2O + H(+). In terms of biological role, allows bacterial pathogens to use the host heme as an iron source. Catalyzes the oxidative degradation of the heme macrocyclic porphyrin ring to the biliverdin in the presence of a suitable electron donor such as ascorbate or NADPH--cytochrome P450 reductase, with subsequent release of free iron. The protein is Heme-degrading monooxygenase of Bacillus cereus (strain ATCC 14579 / DSM 31 / CCUG 7414 / JCM 2152 / NBRC 15305 / NCIMB 9373 / NCTC 2599 / NRRL B-3711).